A 326-amino-acid polypeptide reads, in one-letter code: Transmembrane protein 171 (326 aa).

A run of 4 helical transmembrane segments spans residues 22 to 42, 57 to 77, 114 to 134, and 161 to 181; these read IFFL…LSIF, MMLK…VILA, LIFG…GIWV, and FLSL…FFVV. Residues 229-326 form a disordered region; it reads FPESSASAAA…LSPSSEPSPP (98 aa). Residues 230 to 240 show a composition bias toward low complexity; sequence PESSASAAARS. Residues 257-266 are compositionally biased toward polar residues; it reads SIFQSGSPTP. 2 stretches are compositionally biased toward low complexity: residues 288–302 and 312–326; these read SSSE…LSEL and ATTT…PSPP.

It is found in the membrane. The protein is Transmembrane protein 171 (TMEM171) of Bos taurus (Bovine).